The primary structure comprises 512 residues: Monocarboxylate transporter 14 (512 aa).

Residues 1–29 lie on the Cytoplasmic side of the membrane; sequence MYTSHEDIGYDLEDDRKAKNKKTLKPHPD. Transmembrane regions (helical) follow at residues 30–50, 76–96, 105–125, 129–149, 161–181, 193–211, 317–337, 355–375, 381–401, 410–430, 446–466, and 476–496; these read IDGGWAWMMVLSSFFVHILIM, WVSSLSMGITLIVGPFIGLFI, AIIGGLVNSLGWVLSAYAANV, FITFGVAAGLGSGMAYLPAVV, LAQGLSTTGTGFGTFLMTVLL, AMFIQGALSLNLCVCGALM, MFVAFIFWALFAYSSFVIPFI, FPLTSIIAILHIFGKVILGAV, ISVWNVFLIANFTLVLSIFLL, LAVICALIGFSSGYFSLMPVV, IIICANGISALLGPPFAGWIF, and FYICGLLYMVGILFLLIQPCI. The Cytoplasmic segment spans residues 497–512; sequence QMIDQSRRKCIEGAHV.

It belongs to the major facilitator superfamily. Monocarboxylate porter (TC 2.A.1.13) family.

The protein resides in the cell membrane. Proton-linked monocarboxylate transporter. May catalyze the transport of monocarboxylates across the plasma membrane. This chain is Monocarboxylate transporter 14 (Slc16a14), found in Mus musculus (Mouse).